A 126-amino-acid polypeptide reads, in one-letter code: MAVPSELKYSKEHEWVKVEGNTVTIGITEYAQGELGDIVFVELPEVDDEINEGDTFGSVESVKTVSELYAPVSGKVLESNEELEDSPEFVNESPYEKAWMVKVELSDESQLEELMSAEQYSEMIGE.

In terms of domain architecture, Lipoyl-binding spans 22-104 (TVTIGITEYA…YEKAWMVKVE (83 aa)). At Lys63 the chain carries N6-lipoyllysine.

The protein belongs to the GcvH family. In terms of assembly, the glycine cleavage system is composed of four proteins: P, T, L and H. It depends on (R)-lipoate as a cofactor.

The glycine cleavage system catalyzes the degradation of glycine. The H protein shuttles the methylamine group of glycine from the P protein to the T protein. Its function is as follows. Is also involved in protein lipoylation via its role as an octanoyl/lipoyl carrier protein intermediate. This Staphylococcus saprophyticus subsp. saprophyticus (strain ATCC 15305 / DSM 20229 / NCIMB 8711 / NCTC 7292 / S-41) protein is Glycine cleavage system H protein.